A 174-amino-acid chain; its full sequence is MAFRQPNTKELKVIRKALSYYGSGDFLSHYALLVKEGEKKEVYGVSKELYGVIGELNPHYAGVKIGEVGRRFRFSLEGTFWLLRNSRNRVWVNERGEMLFLYGRDIFAGSVERASEFGENSIVFVCNRFDDVLGIGRSRHSSDELSNLPEDKVFVENLVDRGEYLRHQKTYLSF.

Residues 87–161 (RNRVWVNERG…KVFVENLVDR (75 aa)) form the PUA domain.

It belongs to the UPF0113 family.

In Archaeoglobus fulgidus (strain ATCC 49558 / DSM 4304 / JCM 9628 / NBRC 100126 / VC-16), this protein is UPF0113 protein AF_0058.